The primary structure comprises 333 residues: Alpha-N-acetylgalactosaminide alpha-2,6-sialyltransferase 6 (333 aa).

Positions 1–12 are enriched in polar residues; that stretch reads MACSRPPSQCEP. Residues 1–26 form a disordered region; the sequence is MACSRPPSQCEPTSLPPGPPAGRRHL. Over 1–43 the chain is Cytoplasmic; sequence MACSRPPSQCEPTSLPPGPPAGRRHLPLSRRRREMSSNKEQRS. The chain crosses the membrane as a helical; Signal-anchor for type II membrane protein span at residues 44–64; the sequence is AVFVILFALITILILYSSNSA. Topologically, residues 65-333 are lumenal; sequence NEVFHYGSLR…GITFSHPSWT (269 aa). The N-linked (GlcNAc...) asparagine glycan is linked to N98. A disulfide bridge connects residues C108 and C256.

It belongs to the glycosyltransferase 29 family. In terms of tissue distribution, expressed in kidney, in proximal tubule epithelial cells. Expressed in colon cell lines.

Its subcellular location is the golgi apparatus membrane. The catalysed reaction is a ganglioside GM1b (d18:1(4E)) + CMP-N-acetyl-beta-neuraminate = a ganglioside GD1alpha (d18:1(4E)) + CMP + H(+). It carries out the reaction N-acetyl-alpha-neuraminosyl-(2-&gt;3)-beta-D-galactosyl-(1-&gt;3)-N-acetyl-beta-D-glucosaminyl-(1-&gt;3)-beta-D-galactosyl-(1-&gt;4)-beta-D-glucosyl-(1&lt;-&gt;1')-N-acyl-sphing-4-enine + CMP-N-acetyl-beta-neuraminate = N-acetyl-alpha-neuraminosyl-(2-&gt;3)-beta-D-galactosyl-(1-&gt;3)-[N-acetyl-alpha-neuraminosyl-(2-&gt;6)]-N-acetyl-beta-D-glucosaminyl-(1-&gt;3)-beta-D-galactosyl-(1-&gt;4)-beta-D-glucosyl-(1&lt;-&gt;1')-N-acyl-sphing-4-enine + CMP + H(+). It catalyses the reaction a globoside MSGG + CMP-N-acetyl-beta-neuraminate = a globoside DSGG + CMP + H(+). The enzyme catalyses a ganglioside GD1a (d18:1(4E)) + CMP-N-acetyl-beta-neuraminate = a ganglioside GT1aalpha (d18:1(4E)) + CMP + H(+). The catalysed reaction is a ganglioside GT1b (d18:1(4E)) + CMP-N-acetyl-beta-neuraminate = a ganglioside GQ1balpha (d18:1(4E)) + CMP + H(+). It carries out the reaction 3-O-[alpha-Neu5Ac-(2-&gt;3)-beta-D-Gal-(1-&gt;3)-alpha-D-GalNAc]-L-Ser-[protein] + CMP-N-acetyl-beta-neuraminate = a 3-O-{alpha-Neu5Ac-(2-&gt;3)-beta-D-Gal-(1-&gt;3)-[alpha-Neu5Ac-(2-&gt;6)]-alpha-D-GalNAc}-L-seryl-[protein] + CMP + H(+). It catalyses the reaction 3-O-[alpha-Neu5Ac-(2-&gt;3)-beta-D-Gal-(1-&gt;3)-alpha-D-GalNAc]-L-Thr-[protein] + CMP-N-acetyl-beta-neuraminate = a 3-O-{alpha-Neu5Ac-(2-&gt;3)-beta-D-Gal-(1-&gt;3)-[alpha-Neu5Ac-(2-&gt;6)]-alpha-D-GalNAc}-L-threonyl-[protein] + CMP + H(+). Transfers the sialyl group (N-acetyl-alpha-neuraminyl or NeuAc) from CMP-NeuAc onto glycoproteins and glycolipids, forming an alpha-2,6-linkage. Produces branched type disialyl structures by transfer of a sialyl group onto the GalNAc or GlcNAc residue inside backbone core chains having a terminal sialic acid with an alpha-2,3-linkage on Gal. ST6GalNAcVI prefers glycolipids to glycoproteins, predominantly catalyzing the biosynthesis of ganglioside GD1alpha from GM1b. Besides GMb1, MSGG and other glycolipids, it shows activity towards sialyl Lc4Cer generating disialyl Lc4Cer, which can lead to the synthesis of disialyl Lewis a (Le(a)), suggested to be a cancer-associated antigen. Also has activity toward GD1a and GT1b, and can generate DSGG (disialylgalactosylgloboside) from MSGG (monosialylgalactosylgloboside). In Homo sapiens (Human), this protein is Alpha-N-acetylgalactosaminide alpha-2,6-sialyltransferase 6 (ST6GALNAC6).